A 285-amino-acid polypeptide reads, in one-letter code: HTH-type transcriptional regulator MurR (285 aa).

In terms of domain architecture, HTH rpiR-type spans 1-77 (MLYLTKIRNA…MALIGEYSAS (77 aa)). Positions 37 to 56 (SRKMAKQLGISQSSIVKFAQ) form a DNA-binding region, H-T-H motif. Residues 128–268 (IIEVISKAPF…FVGLVQLNDV (141 aa)) enclose the SIS domain.

In terms of assembly, homotetramer.

Its pathway is amino-sugar metabolism; N-acetylmuramate degradation [regulation]. In terms of biological role, represses the expression of the murPQ operon involved in the uptake and degradation of N-acetylmuramic acid (MurNAc). Binds to two adjacent inverted repeats within the operator region. MurNAc 6-phosphate, the substrate of MurQ, is the specific inducer that weakens binding of MurR to the operator. This chain is HTH-type transcriptional regulator MurR, found in Escherichia coli O7:K1 (strain IAI39 / ExPEC).